Reading from the N-terminus, the 388-residue chain is bZIP transcription factor ABI5 homolog (388 aa).

The disordered stretch occupies residues 1 to 36 (MASEMSKNVKVTDDQEVTSQERDQSGGTKVGGEEEI). Phosphoserine is present on Ser44. The bZIP domain maps to 302–365 (VERRQRRMIK…KQMLVEKMME (64 aa)). The basic motif stretch occupies residues 304–323 (RRQRRMIKNRESAARSRARK). The leucine-zipper stretch occupies residues 330–344 (LEAELNYLKQENARL). The tract at residues 368–388 (KEKMNANRGGSQLRRSGSCMW) is disordered.

The protein belongs to the bZIP family. ABI5 subfamily. Forms homodimers. Interacts with VP1. Interacts with GF14D. Interacts with PP2C51. Interacts with SAPK2. Post-translationally, phosphorylated at Ser-44 by SAPK6. As to expression, expressed in roots, leaves and panicles. Expressed in seeds.

The protein localises to the nucleus. Its function is as follows. Transcription factor that possesses transactivation activity in yeast. Involved in abscisic acid (ABA) signaling pathway. Binds to the G-box motif 5'-CACGTG-3' of TRAB1 gene promoter. Involved in the regulation of pollen maturation. May act as negative regulator of salt stress response. Together with PYL5, PP2C30 and SAPK2, is part of an ABA signaling unit that modulates seed germination and early seedling growth. The chain is bZIP transcription factor ABI5 homolog from Oryza sativa subsp. japonica (Rice).